The chain runs to 71 residues: UPF0434 protein Csal_1588 (71 aa).

This sequence belongs to the UPF0434 family.

This Chromohalobacter salexigens (strain ATCC BAA-138 / DSM 3043 / CIP 106854 / NCIMB 13768 / 1H11) protein is UPF0434 protein Csal_1588.